Reading from the N-terminus, the 555-residue chain is Dihydroxy-acid dehydratase (555 aa).

Mg(2+) is bound at residue Asp80. Cys121 contacts [2Fe-2S] cluster. Positions 122 and 123 each coordinate Mg(2+). Lys123 is subject to N6-carboxylysine. [2Fe-2S] cluster is bound at residue Cys193. Residue Glu444 coordinates Mg(2+). Ser470 serves as the catalytic Proton acceptor.

Belongs to the IlvD/Edd family. In terms of assembly, homodimer. [2Fe-2S] cluster is required as a cofactor. It depends on Mg(2+) as a cofactor.

The enzyme catalyses (2R)-2,3-dihydroxy-3-methylbutanoate = 3-methyl-2-oxobutanoate + H2O. It catalyses the reaction (2R,3R)-2,3-dihydroxy-3-methylpentanoate = (S)-3-methyl-2-oxopentanoate + H2O. It functions in the pathway amino-acid biosynthesis; L-isoleucine biosynthesis; L-isoleucine from 2-oxobutanoate: step 3/4. It participates in amino-acid biosynthesis; L-valine biosynthesis; L-valine from pyruvate: step 3/4. Its function is as follows. Functions in the biosynthesis of branched-chain amino acids. Catalyzes the dehydration of (2R,3R)-2,3-dihydroxy-3-methylpentanoate (2,3-dihydroxy-3-methylvalerate) into 2-oxo-3-methylpentanoate (2-oxo-3-methylvalerate) and of (2R)-2,3-dihydroxy-3-methylbutanoate (2,3-dihydroxyisovalerate) into 2-oxo-3-methylbutanoate (2-oxoisovalerate), the penultimate precursor to L-isoleucine and L-valine, respectively. This chain is Dihydroxy-acid dehydratase, found in Aquifex aeolicus (strain VF5).